Consider the following 254-residue polypeptide: Alcohol dehydrogenase 1 (254 aa).

10 to 33 (FVAGLGGIGLDTSREIVKSGPKNL) provides a ligand contact to NAD(+). S138 contributes to the substrate binding site. Y151 (proton acceptor) is an active-site residue.

This sequence belongs to the short-chain dehydrogenases/reductases (SDR) family. In terms of assembly, homodimer.

The catalysed reaction is a primary alcohol + NAD(+) = an aldehyde + NADH + H(+). It carries out the reaction a secondary alcohol + NAD(+) = a ketone + NADH + H(+). The protein is Alcohol dehydrogenase 1 (Adh1) of Drosophila montana (Fruit fly).